The sequence spans 169 residues: uncharacterized protein (169 aa).

Disordered regions lie at residues 32–53 (VSGP…APAP) and 148–169 (VSGS…AGGA).

This is an uncharacterized protein from Homo sapiens (Human).